The sequence spans 657 residues: Autophagy-related protein 22 (657 aa).

A compositionally biased stretch (low complexity) spans 1–15 (MAPNLQPQPQSQLQR). The segment at 1 to 78 (MAPNLQPQPQ…VVPRHFGHDA (78 aa)) is disordered. Residues 1-91 (MAPNLQPQPQ…SRRELLGWYA (91 aa)) are Cytoplasmic-facing. Residues 26-40 (GLSNISKRSFRSCAT) show a composition bias toward polar residues. The chain crosses the membrane as a helical span at residues 92-112 (YAFAAETYVICGIASFIPILL). At 113-155 (ETLARENGVLVSDRKTPCGSSDSKNDGDGQCIVWVFGMEINTA) the chain is on the vacuolar side. The chain crosses the membrane as a helical span at residues 156–176 (SFAMYTFSVSVLVQALLVVSI). Over 177-187 (SCAADHGNYRK) the chain is Cytoplasmic. The chain crosses the membrane as a helical span at residues 188–208 (KLLLTFAWIGSFAVMSYIFIT). Over 209–212 (KDNY) the chain is Vacuolar. A helical membrane pass occupies residues 213–233 (ILGALLTVISNTSFGASFVLL). Residues 234–317 (NSFLPLLVRY…ELELSTRISA (84 aa)) lie on the Cytoplasmic side of the membrane. Residues 318–338 (IGIGTGYIAALFLQCICIGVL) form a helical membrane-spanning segment. Over 339–349 (ISLHNTTWGQR) the chain is Vacuolar. An N-linked (GlcNAc...) asparagine glycan is attached at Asn-343. A helical membrane pass occupies residues 350 to 370 (VVLFMVGVWWTVFTIPAAMWL). The Cytoplasmic segment spans residues 371-384 (RPRPGPPLADNGRK). The helical transmembrane segment at 385-405 (GIMAGLAYILYAWKSLFKTIQ) threads the bilayer. The Vacuolar segment spans residues 406 to 409 (QARR). The chain crosses the membrane as a helical span at residues 410-430 (LLDIVLFLAGWFLLSDAIATT). At 431–446 (SSTAILFAKTQLHMKP) the chain is on the cytoplasmic side. Residues 447-467 (WALGMINVISTTAGVFGAFGW) form a helical membrane-spanning segment. Topologically, residues 468-481 (SWVSRLFNLKAHQT) are vacuolar. Residues 482 to 502 (ILVCIALFELIPLYGLLGYLP) traverse the membrane as a helical segment. At 503-515 (FVKNWGVFGLQQP) the chain is on the cytoplasmic side. The chain crosses the membrane as a helical span at residues 516-536 (WEMYPLAAVYGVVLGGLSGYC). The Vacuolar portion of the chain corresponds to 537 to 554 (RSLYGELIPPGSEAAFYA). A helical transmembrane segment spans residues 555 to 575 (LYAITDKGSSVFGPTIVGAII). Over 576-583 (DRTGTIRP) the chain is Cytoplasmic. The helical transmembrane segment at 584-604 (AFWFLAVLVGFPAPLIWFIDV) threads the bilayer. Topologically, residues 605–657 (ERGRREGAKLAKSITDSIVQEEDESDDGAERRGMLSDYEREHGQSIDDERAGR) are vacuolar. The segment at 615 to 657 (AKSITDSIVQEEDESDDGAERRGMLSDYEREHGQSIDDERAGR) is disordered. The span at 632 to 657 (GAERRGMLSDYEREHGQSIDDERAGR) shows a compositional bias: basic and acidic residues.

This sequence belongs to the ATG22 family.

It is found in the vacuole membrane. In terms of biological role, vacuolar effluxer which mediate the efflux of leucine and other amino acids resulting from autophagic degradation. The release of autophagic amino acids allows the maintenance of protein synthesis and viability during nitrogen starvation. Autophagy is required for proper vegetative growth, asexual/sexual reproduction, and full virulence. Autophagy is particularly involved in the biosynthesis of deoxynivalenol (DON), an important virulence determinant. The protein is Autophagy-related protein 22 of Gibberella zeae (strain ATCC MYA-4620 / CBS 123657 / FGSC 9075 / NRRL 31084 / PH-1) (Wheat head blight fungus).